A 290-amino-acid chain; its full sequence is Agmatinase (290 aa).

H112, D135, H137, D139, D216, and D218 together coordinate Mn(2+).

It belongs to the arginase family. Agmatinase subfamily. The cofactor is Mn(2+).

It carries out the reaction agmatine + H2O = urea + putrescine. The protein operates within amine and polyamine biosynthesis; putrescine biosynthesis via agmatine pathway; putrescine from agmatine: step 1/1. Its function is as follows. Catalyzes the formation of putrescine from agmatine. This Bacillus cereus (strain ATCC 14579 / DSM 31 / CCUG 7414 / JCM 2152 / NBRC 15305 / NCIMB 9373 / NCTC 2599 / NRRL B-3711) protein is Agmatinase (speB).